A 94-amino-acid polypeptide reads, in one-letter code: Lipolysis-activating peptide 1-beta chain (94 aa).

The first 19 residues, 1–19, serve as a signal peptide directing secretion; sequence MKILAVVLISVIVLNTANG. In terms of domain architecture, LCN-type CS-alpha/beta spans 20 to 87; it reads ENYYPQKYTN…YFNALESQCP (68 aa). 3 disulfides stabilise this stretch: Cys34–Cys56, Cys42–Cys66, and Cys46–Cys68.

It belongs to the long (3 C-C) scorpion toxin superfamily. As to quaternary structure, homodimer; disulfide-linked or monomer (edited version) or heterodimer of an alpha chain (AC P0CI44 or AC P0CI45) and this beta chain (non-edited version). As to expression, expressed by the venom gland.

Its subcellular location is the secreted. The homodimer inhibits HMG-CoA reductase (HMGCR) (32% of inhibition produced by 0.6 uM), a glycoprotein involved in the control of cholesterol biosynthesis. The inhibitory effects of bumarsin are seen at much lower concentrations (0.6 uM) than that for statins such as atorvastatin (5 mM) and simvastatin (10 uM). In addition to inhibition of HMG-CoA reductase, this protein lowers cholesterol levels by inducing steroid hormone synthesis via StAR, and by increasing reverse cholesterol transport mediated by the induction of ABCA1 and APOA1. Functionally, the heterodimer non-edited LVP1 induces lipolysis in rat adipocytes. Induction of lipolysis by LVP1 appears to be mediated through the beta-2 adrenergic receptor pathway (ADRB2). Its function is as follows. The monomer edited version, similar to alpha-toxins, may modulate voltage-gated sodium channels (Nav) and may block voltage-gated potassium channels (Kv). This Lychas mucronatus (Chinese swimming scorpion) protein is Lipolysis-activating peptide 1-beta chain.